A 572-amino-acid chain; its full sequence is Urease subunit alpha (572 aa).

One can recognise a Urease domain in the interval 136–572 (GGIDTHIHWI…VPLAQRYFLF (437 aa)). Ni(2+) is bound by residues His-141, His-143, and Lys-224. At Lys-224 the chain carries N6-carboxylysine. Position 226 (His-226) interacts with substrate. 2 residues coordinate Ni(2+): His-253 and His-279. His-327 functions as the Proton donor in the catalytic mechanism. Asp-367 is a Ni(2+) binding site.

The protein belongs to the metallo-dependent hydrolases superfamily. Urease alpha subunit family. As to quaternary structure, heterotrimer of UreA (gamma), UreB (beta) and UreC (alpha) subunits. Three heterotrimers associate to form the active enzyme. Ni cation is required as a cofactor. Post-translationally, carboxylation allows a single lysine to coordinate two nickel ions.

It is found in the cytoplasm. It catalyses the reaction urea + 2 H2O + H(+) = hydrogencarbonate + 2 NH4(+). The protein operates within nitrogen metabolism; urea degradation; CO(2) and NH(3) from urea (urease route): step 1/1. The polypeptide is Urease subunit alpha (Actinobacillus pleuropneumoniae serotype 7 (strain AP76)).